The sequence spans 111 residues: 2Fe-2S ferredoxin (111 aa).

The 104-residue stretch at 1–104 (MPKIFFLPHK…DIEVQIPLYN (104 aa)) folds into the 2Fe-2S ferredoxin-type domain. Residues C42, C48, C51, and C87 each coordinate [2Fe-2S] cluster.

It belongs to the adrenodoxin/putidaredoxin family. It depends on [2Fe-2S] cluster as a cofactor.

In terms of biological role, ferredoxin are iron-sulfur proteins that transfer electrons in a wide variety of metabolic reactions. This chain is 2Fe-2S ferredoxin (fdx), found in Buchnera aphidicola subsp. Schizaphis graminum (strain Sg).